The sequence spans 96 residues: Nucleoid-associated protein CT_335 (96 aa).

The protein belongs to the YbaB/EbfC family. Homodimer.

It is found in the cytoplasm. Its subcellular location is the nucleoid. Its function is as follows. Binds to DNA and alters its conformation. May be involved in regulation of gene expression, nucleoid organization and DNA protection. The chain is Nucleoid-associated protein CT_335 from Chlamydia trachomatis serovar D (strain ATCC VR-885 / DSM 19411 / UW-3/Cx).